Consider the following 245-residue polypeptide: rRNA adenine N-6-methyltransferase (245 aa).

S-adenosyl-L-methionine-binding residues include Asn10, Leu12, Gly37, Glu58, Asp83, and Ser100.

Belongs to the class I-like SAM-binding methyltransferase superfamily. rRNA adenine N(6)-methyltransferase family.

It catalyses the reaction adenosine(2085) in 23S rRNA + 2 S-adenosyl-L-methionine = N(6)-dimethyladenosine(2085) in 23S rRNA + 2 S-adenosyl-L-homocysteine + 2 H(+). This protein produces a dimethylation of the adenine residue at position 2085 in 23S rRNA, resulting in reduced affinity between ribosomes and macrolide-lincosamide-streptogramin B antibiotics. In Streptococcus sanguinis, this protein is rRNA adenine N-6-methyltransferase.